The chain runs to 249 residues: 2,3-bisphosphoglycerate-dependent phosphoglycerate mutase (249 aa).

Residues 9 to 16 (RHGQSQWN), 22 to 23 (TG), Arg-61, 88 to 91 (ERHY), Lys-99, 115 to 116 (RR), and 184 to 185 (GN) each bind substrate. His-10 (tele-phosphohistidine intermediate) is an active-site residue. Glu-88 functions as the Proton donor/acceptor in the catalytic mechanism.

It belongs to the phosphoglycerate mutase family. BPG-dependent PGAM subfamily. In terms of assembly, homodimer.

The catalysed reaction is (2R)-2-phosphoglycerate = (2R)-3-phosphoglycerate. Its pathway is carbohydrate degradation; glycolysis; pyruvate from D-glyceraldehyde 3-phosphate: step 3/5. Catalyzes the interconversion of 2-phosphoglycerate and 3-phosphoglycerate. In Xylella fastidiosa (strain M23), this protein is 2,3-bisphosphoglycerate-dependent phosphoglycerate mutase.